A 427-amino-acid chain; its full sequence is Gamma-glutamyl phosphate reductase (427 aa).

It belongs to the gamma-glutamyl phosphate reductase family.

It is found in the cytoplasm. It carries out the reaction L-glutamate 5-semialdehyde + phosphate + NADP(+) = L-glutamyl 5-phosphate + NADPH + H(+). It participates in amino-acid biosynthesis; L-proline biosynthesis; L-glutamate 5-semialdehyde from L-glutamate: step 2/2. Its function is as follows. Catalyzes the NADPH-dependent reduction of L-glutamate 5-phosphate into L-glutamate 5-semialdehyde and phosphate. The product spontaneously undergoes cyclization to form 1-pyrroline-5-carboxylate. In Streptomyces griseus subsp. griseus (strain JCM 4626 / CBS 651.72 / NBRC 13350 / KCC S-0626 / ISP 5235), this protein is Gamma-glutamyl phosphate reductase.